Here is a 610-residue protein sequence, read N- to C-terminus: UvrABC system protein C (610 aa).

The GIY-YIG domain maps to 13-91 (HLPGVYRMYD…IKENQPKYNV (79 aa)). The UVR domain occupies 201–236 (GQVVEHLVQKMENAAQELDFEAAARFRDQIQSVRAV).

This sequence belongs to the UvrC family. Interacts with UvrB in an incision complex.

It is found in the cytoplasm. In terms of biological role, the UvrABC repair system catalyzes the recognition and processing of DNA lesions. UvrC both incises the 5' and 3' sides of the lesion. The N-terminal half is responsible for the 3' incision and the C-terminal half is responsible for the 5' incision. In Actinobacillus pleuropneumoniae serotype 7 (strain AP76), this protein is UvrABC system protein C.